The chain runs to 518 residues: Glutamate--cysteine ligase (518 aa).

Belongs to the glutamate--cysteine ligase type 1 family. Type 1 subfamily.

It catalyses the reaction L-cysteine + L-glutamate + ATP = gamma-L-glutamyl-L-cysteine + ADP + phosphate + H(+). It participates in sulfur metabolism; glutathione biosynthesis; glutathione from L-cysteine and L-glutamate: step 1/2. The chain is Glutamate--cysteine ligase from Escherichia coli O127:H6 (strain E2348/69 / EPEC).